An 81-amino-acid chain; its full sequence is Putative membrane protein insertion efficiency factor (81 aa).

The disordered stretch occupies residues 61 to 81 (NDGGFDPVPPAPSSRTSSIAE).

It belongs to the UPF0161 family.

The protein localises to the cell inner membrane. Its function is as follows. Could be involved in insertion of integral membrane proteins into the membrane. This is Putative membrane protein insertion efficiency factor from Pseudomonas putida (strain ATCC 700007 / DSM 6899 / JCM 31910 / BCRC 17059 / LMG 24140 / F1).